The sequence spans 831 residues: Translation initiation factor IF-2 (831 aa).

Residues 116–157 (IEPLETDKEVEQKQQNTEENKVEVSAKIVQDDEDIPSQIPKK) form a disordered region. The segment covering 117–139 (EPLETDKEVEQKQQNTEENKVEV) has biased composition (basic and acidic residues). The tr-type G domain occupies 329 to 499 (TRAPVVTVMG…LLIAEMQDLK (171 aa)). The segment at 338–345 (GHVDHGKT) is G1. 338–345 (GHVDHGKT) is a binding site for GTP. A G2 region spans residues 363–367 (GITQH). The interval 385-388 (DTPG) is G3. Residues 385 to 389 (DTPGH) and 439 to 442 (NKID) contribute to the GTP site. The G4 stretch occupies residues 439-442 (NKID). The interval 475 to 477 (SAL) is G5.

Belongs to the TRAFAC class translation factor GTPase superfamily. Classic translation factor GTPase family. IF-2 subfamily.

The protein localises to the cytoplasm. One of the essential components for the initiation of protein synthesis. Protects formylmethionyl-tRNA from spontaneous hydrolysis and promotes its binding to the 30S ribosomal subunits. Also involved in the hydrolysis of GTP during the formation of the 70S ribosomal complex. This chain is Translation initiation factor IF-2, found in Rickettsia conorii (strain ATCC VR-613 / Malish 7).